The chain runs to 528 residues: Inorganic phosphate transporter 1-2 (528 aa).

Residues 1 to 24 (MAGSQLNVLVKLDQAKTQWYHFMA) are Cytoplasmic-facing. The chain crosses the membrane as a helical span at residues 25-45 (IVIAGMGFFTDAYDLFCIALV). Topologically, residues 46-71 (TKLLGRLYYTDITKPNPGTLPPNVSS) are extracellular. A helical membrane pass occupies residues 72 to 92 (AVTGVALCGTLAGQLFFGWLG). At 93–99 (DKLGRKS) the chain is on the cytoplasmic side. The helical transmembrane segment at 100-120 (VYGFTLILMVVCSIASGLSFG) threads the bilayer. Topologically, residues 121–125 (HTPKS) are extracellular. A helical transmembrane segment spans residues 126–146 (VIATLCFFRFWLGFGIGGDYP). Residues 147 to 163 (LSATIMSEYASKKTRGA) lie on the Cytoplasmic side of the membrane. The helical transmembrane segment at 164–184 (FIAAVFAMQGFGILFGAIVAL) threads the bilayer. Over 185–212 (VVSAGFRHAYPAPSYAQNPAASLAPQAD) the chain is Extracellular. The helical transmembrane segment at 213 to 232 (YTWRLILMFGTIPAGLTYYW) threads the bilayer. At 233–296 (RMKMPETARY…RQFMKRHGMH (64 aa)) the chain is on the cytoplasmic side. The chain crosses the membrane as a helical span at residues 297 to 317 (LLATTSTWFLLDIAFYSQNLF). Residues 318–348 (QKDIFSKVGWIPPAKTMNALEELYRISRAQA) are Extracellular-facing. A helical membrane pass occupies residues 349–369 (LIALCGTIPGYWFTVAFIDIV). Topologically, residues 370 to 371 (GR) are cytoplasmic. A helical transmembrane segment spans residues 372–392 (FWIQIMGFFMMTVFMLALGVP). At 393 to 405 (YDHWTHPAHHTGF) the chain is on the extracellular side. The helical transmembrane segment at 406 to 426 (VVLYALTFFFANFGPNSTTFI) threads the bilayer. Residues 427 to 442 (VPAEIFPARLRSTCHG) are Cytoplasmic-facing. Residues 443–463 (ISAASGKAGAIIGAFGFLYAA) traverse the membrane as a helical segment. Over 464 to 481 (QDQHNPDAGYSRGIGIRN) the chain is Extracellular. A helical membrane pass occupies residues 482–502 (ALFVLAGTNFLGMLMTLLVPE). The Cytoplasmic segment spans residues 503 to 528 (SKGLSLEEMSKDNVVDETAQEAIAQA).

This sequence belongs to the major facilitator superfamily. Phosphate:H(+) symporter (TC 2.A.1.9) family. In terms of tissue distribution, expressed in the root stele and leaf phloem and xylem.

The protein localises to the membrane. Its function is as follows. Low-affinity transporter for inorganic phosphate (Pi). Involved in internal Pi transport from root to shoot. Responsible for most of the PHR2-mediated accumulation of excess shoot Pi under abundant Pi conditions, but not for PHO2-mediated accumulation of excess shoot Pi. Acts as a H(+):phosphate symporter. The chain is Inorganic phosphate transporter 1-2 (PTH1-2) from Oryza sativa subsp. japonica (Rice).